We begin with the raw amino-acid sequence, 254 residues long: Imidazole glycerol phosphate synthase subunit HisF (254 aa).

Catalysis depends on residues Asp-12 and Asp-132.

It belongs to the HisA/HisF family. Heterodimer of HisH and HisF.

The protein localises to the cytoplasm. It carries out the reaction 5-[(5-phospho-1-deoxy-D-ribulos-1-ylimino)methylamino]-1-(5-phospho-beta-D-ribosyl)imidazole-4-carboxamide + L-glutamine = D-erythro-1-(imidazol-4-yl)glycerol 3-phosphate + 5-amino-1-(5-phospho-beta-D-ribosyl)imidazole-4-carboxamide + L-glutamate + H(+). Its pathway is amino-acid biosynthesis; L-histidine biosynthesis; L-histidine from 5-phospho-alpha-D-ribose 1-diphosphate: step 5/9. In terms of biological role, IGPS catalyzes the conversion of PRFAR and glutamine to IGP, AICAR and glutamate. The HisF subunit catalyzes the cyclization activity that produces IGP and AICAR from PRFAR using the ammonia provided by the HisH subunit. The sequence is that of Imidazole glycerol phosphate synthase subunit HisF from Symbiobacterium thermophilum (strain DSM 24528 / JCM 14929 / IAM 14863 / T).